Reading from the N-terminus, the 225-residue chain is uncharacterized protein (225 aa).

The region spanning 114–219 is the Fe2OG dioxygenase domain; it reads DAEAIIMQVY…RLSVTMRRII (106 aa).

Belongs to the iron/ascorbate-dependent oxidoreductase family.

It localises to the cytoplasm. The protein resides in the nucleus. This is an uncharacterized protein from Schizosaccharomyces pombe (strain 972 / ATCC 24843) (Fission yeast).